Reading from the N-terminus, the 477-residue chain is Putative BTB/POZ domain-containing protein R830 (477 aa).

The BTB domain maps to 13–83 (SDLELILVDK…FYGIETNNDP (71 aa)).

Belongs to the mimivirus BTB/WD family.

The protein is Putative BTB/POZ domain-containing protein R830 of Acanthamoeba polyphaga mimivirus (APMV).